Reading from the N-terminus, the 106-residue chain is Ig kappa chain C region, B allele (106 aa).

In terms of domain architecture, Ig-like spans 5–102 (PTVSIFPPST…SSSPVVKSFN (98 aa)). The cysteines at positions 26 and 86 are disulfide-linked.

This chain is Ig kappa chain C region, B allele, found in Rattus norvegicus (Rat).